Consider the following 94-residue polypeptide: Integration host factor subunit beta (94 aa).

It belongs to the bacterial histone-like protein family. In terms of assembly, heterodimer of an alpha and a beta chain.

This protein is one of the two subunits of integration host factor, a specific DNA-binding protein that functions in genetic recombination as well as in transcriptional and translational control. The polypeptide is Integration host factor subunit beta (Serratia proteamaculans (strain 568)).